Reading from the N-terminus, the 78-residue chain is D-alanyl carrier protein (78 aa).

The Carrier domain maps to 1 to 78 (MEFREQVLDL…KIVEALEELR (78 aa)). Ser-36 carries the post-translational modification O-(pantetheine 4'-phosphoryl)serine.

The protein belongs to the DltC family. 4'-phosphopantetheine is transferred from CoA to a specific serine of apo-DCP.

It localises to the cytoplasm. Its pathway is cell wall biogenesis; lipoteichoic acid biosynthesis. Functionally, carrier protein involved in the D-alanylation of lipoteichoic acid (LTA). The loading of thioester-linked D-alanine onto DltC is catalyzed by D-alanine--D-alanyl carrier protein ligase DltA. The DltC-carried D-alanyl group is further transferred to cell membrane phosphatidylglycerol (PG) by forming an ester bond, probably catalyzed by DltD. D-alanylation of LTA plays an important role in modulating the properties of the cell wall in Gram-positive bacteria, influencing the net charge of the cell wall. The protein is D-alanyl carrier protein of Staphylococcus epidermidis (strain ATCC 35984 / DSM 28319 / BCRC 17069 / CCUG 31568 / BM 3577 / RP62A).